The sequence spans 1237 residues: Cilia- and flagella-associated protein 61 (1237 aa).

The tract at residues 278–301 (QDLSVRRSQDAELRSSSQGSQKIV) is disordered. Over residues 281-290 (SVRRSQDAEL) the composition is skewed to basic and acidic residues.

Component of axonemal radial spokes, the protein complexes that link the outer microtubule doublets with the central pair of microtubules. Interacts with CFAP91/MAATS1, ODAD2/ARMC4, RSPH3A, ROPN1, ROPN1L and RSPH9. Interacts with DYNLT1, DYNC1I2 and TUBB3. Interacts with WDR35, IFT22 and IFT81.

The protein localises to the cytoplasm. The protein resides in the cytoskeleton. It is found in the flagellum axoneme. In terms of biological role, involved in sperm flagellum assembly. Plays an essential role in the formation of the radial spokes in flagellum axoneme. The chain is Cilia- and flagella-associated protein 61 from Homo sapiens (Human).